The chain runs to 57 residues: Large ribosomal subunit protein uL30 (57 aa).

It belongs to the universal ribosomal protein uL30 family. In terms of assembly, part of the 50S ribosomal subunit.

This chain is Large ribosomal subunit protein uL30, found in Buchnera aphidicola subsp. Cinara cedri (strain Cc).